A 318-amino-acid polypeptide reads, in one-letter code: Aspartate carbamoyltransferase catalytic subunit (318 aa).

Arginine 58 and threonine 59 together coordinate carbamoyl phosphate. Residue lysine 86 coordinates L-aspartate. Residues arginine 108, histidine 141, and glutamine 144 each contribute to the carbamoyl phosphate site. 2 residues coordinate L-aspartate: arginine 174 and arginine 226. Positions 270 and 271 each coordinate carbamoyl phosphate.

The protein belongs to the aspartate/ornithine carbamoyltransferase superfamily. ATCase family. In terms of assembly, heterododecamer (2C3:3R2) of six catalytic PyrB chains organized as two trimers (C3), and six regulatory PyrI chains organized as three dimers (R2).

It carries out the reaction carbamoyl phosphate + L-aspartate = N-carbamoyl-L-aspartate + phosphate + H(+). It functions in the pathway pyrimidine metabolism; UMP biosynthesis via de novo pathway; (S)-dihydroorotate from bicarbonate: step 2/3. In terms of biological role, catalyzes the condensation of carbamoyl phosphate and aspartate to form carbamoyl aspartate and inorganic phosphate, the committed step in the de novo pyrimidine nucleotide biosynthesis pathway. The protein is Aspartate carbamoyltransferase catalytic subunit of Lactobacillus helveticus (strain DPC 4571).